A 385-amino-acid polypeptide reads, in one-letter code: UPF0284 protein PMT9312_0438 (385 aa).

Belongs to the UPF0284 family.

This is UPF0284 protein PMT9312_0438 from Prochlorococcus marinus (strain MIT 9312).